Reading from the N-terminus, the 400-residue chain is Elongation factor Tu (400 aa).

The region spanning 10–210 is the tr-type G domain; sequence KPHCNVGTIG…VDSYIPIPPR (201 aa). The segment at 19–26 is G1; that stretch reads GHVDHGKT. Position 19–26 (19–26) interacts with GTP; sequence GHVDHGKT. Residue threonine 26 coordinates Mg(2+). Residues 60–64 form a G2 region; sequence GLTIA. Positions 81–84 are G3; the sequence is DCPG. GTP-binding positions include 81-85 and 136-139; these read DCPGH and NKCD. The interval 136–139 is G4; sequence NKCD. A G5 region spans residues 174 to 176; the sequence is SAI.

Belongs to the TRAFAC class translation factor GTPase superfamily. Classic translation factor GTPase family. EF-Tu/EF-1A subfamily. In terms of assembly, monomer.

It is found in the cytoplasm. The catalysed reaction is GTP + H2O = GDP + phosphate + H(+). In terms of biological role, GTP hydrolase that promotes the GTP-dependent binding of aminoacyl-tRNA to the A-site of ribosomes during protein biosynthesis. This is Elongation factor Tu from Dehalococcoides mccartyi (strain ATCC BAA-2266 / KCTC 15142 / 195) (Dehalococcoides ethenogenes (strain 195)).